Consider the following 174-residue polypeptide: Ribulose bisphosphate carboxylase small subunit, chloroplastic (174 aa).

The transit peptide at 1–45 directs the protein to the chloroplast; it reads MAPTVMASSATSVAPFQGLKSTAGLPVSRRSNASSASVSNGGRIR.

The protein belongs to the RuBisCO small chain family. In terms of assembly, heterohexadecamer of 8 large and 8 small subunits.

The protein localises to the plastid. Its subcellular location is the chloroplast. Its function is as follows. RuBisCO catalyzes two reactions: the carboxylation of D-ribulose 1,5-bisphosphate, the primary event in carbon dioxide fixation, as well as the oxidative fragmentation of the pentose substrate. Both reactions occur simultaneously and in competition at the same active site. Although the small subunit is not catalytic it is essential for maximal activity. This chain is Ribulose bisphosphate carboxylase small subunit, chloroplastic, found in Hordeum vulgare (Barley).